A 215-amino-acid chain; its full sequence is Cytochrome b6 (215 aa).

The helical transmembrane segment at 32–52 (IFYCLGGITLTCFLVQVATGF) threads the bilayer. Cys-35 provides a ligand contact to heme c. His-86 and His-100 together coordinate heme b. A run of 3 helical transmembrane segments spans residues 90–110 (ASMMVLMMILHVFRVYLTGGF), 116–136 (LTWVTGVILSVITVSFGVTGY), and 186–206 (LHTFVLPLLAAVFMLMHFLMI). Heme b is bound by residues His-187 and His-202.

This sequence belongs to the cytochrome b family. PetB subfamily. As to quaternary structure, the 4 large subunits of the cytochrome b6-f complex are cytochrome b6, subunit IV (17 kDa polypeptide, PetD), cytochrome f and the Rieske protein, while the 4 small subunits are PetG, PetL, PetM and PetN. The complex functions as a dimer. Heme b is required as a cofactor. Requires heme c as cofactor.

It localises to the plastid. The protein localises to the chloroplast thylakoid membrane. Functionally, component of the cytochrome b6-f complex, which mediates electron transfer between photosystem II (PSII) and photosystem I (PSI), cyclic electron flow around PSI, and state transitions. The sequence is that of Cytochrome b6 from Ostreococcus tauri.